Consider the following 306-residue polypeptide: Glutaminase (306 aa).

Ser-64, Asn-115, Glu-159, Asn-166, Tyr-190, Tyr-242, and Val-260 together coordinate substrate.

It belongs to the glutaminase family. In terms of assembly, homotetramer.

The catalysed reaction is L-glutamine + H2O = L-glutamate + NH4(+). The polypeptide is Glutaminase (Vibrio cholerae serotype O1 (strain ATCC 39541 / Classical Ogawa 395 / O395)).